A 1033-amino-acid chain; its full sequence is Lethal(2) giant larvae protein homolog SRO7 (1033 aa).

The disordered stretch occupies residues Ser-16–Lys-45. Positions Lys-18–Glu-27 are enriched in polar residues. Over residues Asn-28 to Lys-45 the composition is skewed to low complexity. WD repeat units follow at residues Ile-81–Lys-114, Ile-121–Phe-156, Ile-161–Leu-197, Ser-216–Phe-249, Val-274–Arg-309, Lys-333–Phe-397, Ile-405–Leu-440, Ala-464–Asn-538, Asp-552–Val-631, Thr-638–Asn-673, Val-685–Asn-736, Lys-745–Gly-799, Leu-804–His-851, and Ser-865–Lys-888. A phosphoserine mark is found at Ser-591 and Ser-602. Positions Ser-953–Gly-984 are disordered.

It belongs to the WD repeat L(2)GL family. In terms of assembly, interacts with MYO2 and SEC9.

Its subcellular location is the cytoplasm. It is found in the cell membrane. In terms of biological role, acts as an allosteric regulator of polarized exocytosis by promoting the targeted fusion of vesicles with the plasma membrane. Coordinates the spatial and temporal nature of both Rab-dependent tethering and SNARE-dependent membrane fusion of exocytic vesicles with the plasma membrane. Required for targeting of the sodium pumping ATPase ENA1 to the Cell Surface, thus being involved in maintenance of ion homeostasis in cells exposed to NaCl stress. May be involved in the targeting of the myosin proteins to their intrinsic pathways. Multicopy suppressor of RHO3. May also participate in the maintenance of cell polarity and bud growth. In Saccharomyces cerevisiae (strain ATCC 204508 / S288c) (Baker's yeast), this protein is Lethal(2) giant larvae protein homolog SRO7 (SRO7).